A 498-amino-acid chain; its full sequence is ATP synthase subunit beta, chloroplastic (498 aa).

172 to 179 (GGAGVGKT) is an ATP binding site.

Belongs to the ATPase alpha/beta chains family. F-type ATPases have 2 components, CF(1) - the catalytic core - and CF(0) - the membrane proton channel. CF(1) has five subunits: alpha(3), beta(3), gamma(1), delta(1), epsilon(1). CF(0) has four main subunits: a(1), b(1), b'(1) and c(9-12).

Its subcellular location is the plastid. The protein resides in the chloroplast thylakoid membrane. It catalyses the reaction ATP + H2O + 4 H(+)(in) = ADP + phosphate + 5 H(+)(out). Functionally, produces ATP from ADP in the presence of a proton gradient across the membrane. The catalytic sites are hosted primarily by the beta subunits. The protein is ATP synthase subunit beta, chloroplastic of Licuala grandis (Ruffled fan palm).